A 424-amino-acid chain; its full sequence is Histidine--tRNA ligase (424 aa).

This sequence belongs to the class-II aminoacyl-tRNA synthetase family. Homodimer.

The protein resides in the cytoplasm. It carries out the reaction tRNA(His) + L-histidine + ATP = L-histidyl-tRNA(His) + AMP + diphosphate + H(+). The protein is Histidine--tRNA ligase of Edwardsiella ictaluri (strain 93-146).